Consider the following 430-residue polypeptide: Histidine--tRNA ligase (430 aa).

It belongs to the class-II aminoacyl-tRNA synthetase family. As to quaternary structure, homodimer.

Its subcellular location is the cytoplasm. The catalysed reaction is tRNA(His) + L-histidine + ATP = L-histidyl-tRNA(His) + AMP + diphosphate + H(+). The polypeptide is Histidine--tRNA ligase (Parasynechococcus marenigrum (strain WH8102)).